A 185-amino-acid polypeptide reads, in one-letter code: Large ribosomal subunit protein uL5 (185 aa).

It belongs to the universal ribosomal protein uL5 family. Part of the 50S ribosomal subunit; part of the 5S rRNA/L5/L18/L25 subcomplex. Contacts the 5S rRNA and the P site tRNA. Forms a bridge to the 30S subunit in the 70S ribosome.

In terms of biological role, this is one of the proteins that bind and probably mediate the attachment of the 5S RNA into the large ribosomal subunit, where it forms part of the central protuberance. In the 70S ribosome it contacts protein S13 of the 30S subunit (bridge B1b), connecting the 2 subunits; this bridge is implicated in subunit movement. Contacts the P site tRNA; the 5S rRNA and some of its associated proteins might help stabilize positioning of ribosome-bound tRNAs. The chain is Large ribosomal subunit protein uL5 from Caulobacter sp. (strain K31).